Consider the following 201-residue polypeptide: Recombination protein RecR (201 aa).

The segment at 57 to 72 (CKLCQIYTEQPLCNIC) adopts a C4-type zinc-finger fold. In terms of domain architecture, Toprim spans 80 to 175 (TLLCVVESPA…KCSRIAHGVP (96 aa)).

The protein belongs to the RecR family.

Functionally, may play a role in DNA repair. It seems to be involved in an RecBC-independent recombinational process of DNA repair. It may act with RecF and RecO. The chain is Recombination protein RecR from Coxiella burnetii (strain RSA 493 / Nine Mile phase I).